The primary structure comprises 1023 residues: 2-oxoglutarate dehydrogenase complex component E1 (1023 aa).

The transit peptide at 1-40 (MFHLRTCAAKLRPLTASQTVKTFSQNRPAAARTFQQIRCY) directs the protein to the mitochondrion. Lys-74 carries the N6-succinyllysine modification. Residue Ser-100 is modified to Phosphoserine. Positions 143, 156, and 158 each coordinate Ca(2+). A thiamine diphosphate-binding site is contributed by Arg-312. The residue at position 401 (Lys-401) is an N6-acetyllysine. Asp-411, Asn-444, and Ile-446 together coordinate thiamine diphosphate. Mg(2+) contacts are provided by Asp-411, Asn-444, and Ile-446. A Glycyl lysine isopeptide (Lys-Gly) (interchain with G-Cter in ubiquitin) cross-link involves residue Lys-534. Lys-564 is modified (N6-succinyllysine). Gln-676 contacts thiamine diphosphate. Lys-970 is modified (N6-acetyllysine).

Belongs to the alpha-ketoglutarate dehydrogenase family. In terms of assembly, homodimer. The 2-oxoglutarate dehydrogenase complex is composed of OGDH (2-oxoglutarate dehydrogenase; E1), DLST (dihydrolipoamide succinyltransferase; E2), DLD (dihydrolipoamide dehydrogenase; E3) and the assembly factor KGD4. It contains multiple copies of the three enzymatic components (E1, E2 and E3). In the nucleus, the 2-oxoglutarate dehydrogenase complex associates with KAT2A. Interacts with ABHD11; this interaction maintains the functional lipoylation of the 2-oxoglutarate dehydrogenase complex. It depends on thiamine diphosphate as a cofactor. Requires Mg(2+) as cofactor.

Its subcellular location is the mitochondrion. The protein resides in the nucleus. It catalyses the reaction N(6)-[(R)-lipoyl]-L-lysyl-[protein] + 2-oxoglutarate + H(+) = N(6)-[(R)-S(8)-succinyldihydrolipoyl]-L-lysyl-[protein] + CO2. Its activity is regulated as follows. Calcium ions and ADP stimulate, whereas ATP and NADH reduce catalytic activity. In terms of biological role, 2-oxoglutarate dehydrogenase (E1o) component of the 2-oxoglutarate dehydrogenase complex (OGDHC). Participates in the first step, rate limiting for the overall conversion of 2-oxoglutarate to succinyl-CoA and CO(2) catalyzed by the whole OGDHC. Catalyzes the irreversible decarboxylation of 2-oxoglutarate (alpha-ketoglutarate) via the thiamine diphosphate (ThDP) cofactor and subsequent transfer of the decarboxylated acyl intermediate on an oxidized dihydrolipoyl group that is covalently amidated to the E2 enzyme (dihydrolipoyllysine-residue succinyltransferase or DLST). Plays a key role in the Krebs (citric acid) cycle, which is a common pathway for oxidation of fuel molecules, including carbohydrates, fatty acids, and amino acids. Can catalyze the decarboxylation of 2-oxoadipate in vitro, but at a much lower rate than 2-oxoglutarate. Mainly active in the mitochondrion. A fraction of the 2-oxoglutarate dehydrogenase complex also localizes in the nucleus and is required for lysine succinylation of histones: associates with KAT2A on chromatin and provides succinyl-CoA to histone succinyltransferase KAT2A. The chain is 2-oxoglutarate dehydrogenase complex component E1 from Macaca fascicularis (Crab-eating macaque).